The chain runs to 21 residues: Peptide PGLa-R6 (21 aa).

The residue at position 21 (L21) is a Leucine amide.

As to expression, expressed by the skin glands.

It is found in the secreted. In terms of biological role, antimicrobial peptide. The protein is Peptide PGLa-R6 of Xenopus ruwenzoriensis (Uganda clawed frog).